The primary structure comprises 148 residues: Large ribosomal subunit protein uL15 (148 aa).

A compositionally biased stretch (basic and acidic residues) spans 1-11 (MSEPIKLHDLR). The interval 1–52 (MSEPIKLHDLRPAAGSNKAKTRVGRGEASKGKTAGRGTKGTKARKQVSAAFE) is disordered.

It belongs to the universal ribosomal protein uL15 family. As to quaternary structure, part of the 50S ribosomal subunit.

Its function is as follows. Binds to the 23S rRNA. This is Large ribosomal subunit protein uL15 from Corynebacterium glutamicum (strain R).